The chain runs to 29 residues: Neurotoxin BmK A3-6 (29 aa).

Contains 3 disulfide bonds. Expressed by the venom gland.

The protein resides in the secreted. This Olivierus martensii (Manchurian scorpion) protein is Neurotoxin BmK A3-6.